The following is a 101-amino-acid chain: uncharacterized protein (101 aa).

A helical transmembrane segment spans residues 70 to 90; sequence VLFIPIILLLPPSCPLTGVTV.

Its subcellular location is the membrane. This is an uncharacterized protein from Saccharomyces cerevisiae (strain ATCC 204508 / S288c) (Baker's yeast).